The chain runs to 356 residues: tRNA N6-adenosine threonylcarbamoyltransferase (356 aa).

Residues His115 and His119 each coordinate Fe cation. Substrate-binding positions include 138–142 (LVSGG), Asp171, Gly184, and Asn283. Asp311 serves as a coordination point for Fe cation.

Belongs to the KAE1 / TsaD family. It depends on Fe(2+) as a cofactor.

Its subcellular location is the cytoplasm. It carries out the reaction L-threonylcarbamoyladenylate + adenosine(37) in tRNA = N(6)-L-threonylcarbamoyladenosine(37) in tRNA + AMP + H(+). In terms of biological role, required for the formation of a threonylcarbamoyl group on adenosine at position 37 (t(6)A37) in tRNAs that read codons beginning with adenine. Is involved in the transfer of the threonylcarbamoyl moiety of threonylcarbamoyl-AMP (TC-AMP) to the N6 group of A37, together with TsaE and TsaB. TsaD likely plays a direct catalytic role in this reaction. In Prochlorococcus marinus (strain SARG / CCMP1375 / SS120), this protein is tRNA N6-adenosine threonylcarbamoyltransferase.